A 293-amino-acid polypeptide reads, in one-letter code: Ribosomal RNA small subunit methyltransferase A (293 aa).

S-adenosyl-L-methionine contacts are provided by Asn29, Leu31, Gly56, Glu77, Asp102, and Asn127.

The protein belongs to the class I-like SAM-binding methyltransferase superfamily. rRNA adenine N(6)-methyltransferase family. RsmA subfamily.

It localises to the cytoplasm. The enzyme catalyses adenosine(1518)/adenosine(1519) in 16S rRNA + 4 S-adenosyl-L-methionine = N(6)-dimethyladenosine(1518)/N(6)-dimethyladenosine(1519) in 16S rRNA + 4 S-adenosyl-L-homocysteine + 4 H(+). In terms of biological role, specifically dimethylates two adjacent adenosines (A1518 and A1519) in the loop of a conserved hairpin near the 3'-end of 16S rRNA in the 30S particle. May play a critical role in biogenesis of 30S subunits. This Lysinibacillus sphaericus (strain C3-41) protein is Ribosomal RNA small subunit methyltransferase A.